Reading from the N-terminus, the 306-residue chain is Glutathione transport system permease protein GsiC (306 aa).

Residues 1–8 are Cytoplasmic-facing; the sequence is MLNYFIKR. A helical membrane pass occupies residues 9–29; sequence LLGLIPTLLIVMVLVFLFVHL. Topologically, residues 30 to 98 are periplasmic; that stretch reads LPGDPARLAA…QEIALRFMPT (69 aa). Positions 95–292 constitute an ABC transmembrane type-1 domain; sequence FMPTFWLTVC…LEFILINLLV (198 aa). The chain crosses the membrane as a helical span at residues 99 to 119; it reads FWLTVCSMAWAVIFGMAIGIV. At 120 to 130 the chain is on the cytoplasmic side; sequence SAVWRNGWPDR. A helical membrane pass occupies residues 131–151; it reads IGMTLAVSGLSFPAFALGMLL. The Periplasmic segment spans residues 152–168; the sequence is MQIFSVELGWLPTVGAD. A helical membrane pass occupies residues 169 to 189; sequence TWLHYILPSLTLGAAVAAVMA. At 190-228 the chain is on the cytoplasmic side; it reads RFTRASFVDVLQEDYMRTARAKGVRESLVVLKHGLRNAL. A helical membrane pass occupies residues 229–249; it reads IPVVTMMGLQFGFLLGGSIVV. The Periplasmic portion of the chain corresponds to 250–278; sequence EKVFNWPGLGRLLVDSVEMRDYPVIQAEV. A helical membrane pass occupies residues 279-299; the sequence is LLFSLEFILINLLVDMLYAAI. Topologically, residues 300–306 are cytoplasmic; the sequence is NPAIRYK.

The protein belongs to the binding-protein-dependent transport system permease family. The complex is composed of two ATP-binding proteins (GsiA), two transmembrane proteins (GsiC and GsiD) and a solute-binding protein (GsiB).

The protein localises to the cell inner membrane. Its function is as follows. Part of the ABC transporter complex GsiABCD involved in glutathione import. Probably responsible for the translocation of the substrate across the membrane. This Pectobacterium atrosepticum (strain SCRI 1043 / ATCC BAA-672) (Erwinia carotovora subsp. atroseptica) protein is Glutathione transport system permease protein GsiC.